Here is a 555-residue protein sequence, read N- to C-terminus: 1,3-beta-glucanosyltransferase GAS2 (555 aa).

An N-terminal signal peptide occupies residues 1-24; that stretch reads MNKKQNFYAAIIVAIFLCLQLSHG. Cysteines 89 and 118 form a disulfide. (1,3-beta-D-glucosyl)n-binding positions include Tyr-107, 134–142, Asn-175, Glu-176, Asp-217, and Arg-222; that span reads SEPDISINR. Glu-176 acts as the Proton donor in catalysis. 6 disulfides stabilise this stretch: Cys-231-Cys-367, Cys-247-Cys-278, Cys-390-Cys-442, Cys-392-Cys-489, Cys-399-Cys-466, and Cys-419-Cys-424. Glu-275 (nucleophile) is an active-site residue. Tyr-307 serves as a coordination point for (1,3-beta-D-glucosyl)n. N-linked (GlcNAc...) asparagine glycosylation occurs at Asn-498. A lipid anchor (GPI-anchor amidated aspartate) is attached at Asp-531. Positions 532-555 are cleaved as a propeptide — removed in mature form; sequence GTIAFKTSGFVILLISMIAAGILL.

It belongs to the glycosyl hydrolase 72 family. In terms of processing, N-glycosylated.

The protein resides in the cell membrane. Its function is as follows. Splits internally a 1,3-beta-glucan molecule and transfers the newly generated reducing end (the donor) to the non-reducing end of another 1,3-beta-glucan molecule (the acceptor) forming a 1,3-beta linkage, resulting in the elongation of 1,3-beta-glucan chains in the cell wall. Involved in spore wall assembly. In Saccharomyces cerevisiae (strain ATCC 204508 / S288c) (Baker's yeast), this protein is 1,3-beta-glucanosyltransferase GAS2 (GAS2).